We begin with the raw amino-acid sequence, 158 residues long: Snaclec coagulation factor X-activating enzyme light chain 2 (158 aa).

Residues 1–24 (MGRFISVSFGLLVVFLSLSGTGAG) form the signal peptide. Disulfide bonds link cysteine 27-cysteine 38, cysteine 55-cysteine 152, and cysteine 127-cysteine 144. The C-type lectin domain occupies 34-153 (YRYFCYRVFK…CEERYLFVCK (120 aa)). Asparagine 82 carries an N-linked (GlcNAc...) (complex) asparagine glycan.

The protein belongs to the snaclec family. As to quaternary structure, heterotrimer; disulfide-linked. The heterotrimer consists of 1 heavy chain (a metalloproteinase) and 2 light chains: LC1 and LC2. N-glycosylated; probably required for conformation. Removal of easily accessible sugars does not change its functional capacity, but removal of the core sugars with N-glycanase causes a virtually complete loss of enzyme activity, apparently as a result of major conformational changes in the molecule. Not O-glycosylated. Expressed by the venom gland.

It localises to the secreted. Functionally, regulatory subunit of the blood coagulation factor X- and IX-activating enzyme. The enzyme activates coagulation factor X (F10) by cleaving the Arg-Ile bond and is also able to activate coagulation factor IX (F9) and protein S (PROS1) by specific cleavage of Arg-Ile and Arg-Val bonds. May serve as an exosite by which the enzyme recognizes and binds to the Gla domain of factor X (F10) and factor IX (F9) in a calcium-dependent manner. The protein is Snaclec coagulation factor X-activating enzyme light chain 2 (LC2) of Daboia siamensis (Eastern Russel's viper).